Here is a 221-residue protein sequence, read N- to C-terminus: Deoxyribose-phosphate aldolase 1 (221 aa).

Asp89 serves as the catalytic Proton donor/acceptor. Catalysis depends on Lys152, which acts as the Schiff-base intermediate with acetaldehyde. Catalysis depends on Lys181, which acts as the Proton donor/acceptor.

Belongs to the DeoC/FbaB aldolase family. DeoC type 1 subfamily.

The protein resides in the cytoplasm. It catalyses the reaction 2-deoxy-D-ribose 5-phosphate = D-glyceraldehyde 3-phosphate + acetaldehyde. It participates in carbohydrate degradation; 2-deoxy-D-ribose 1-phosphate degradation; D-glyceraldehyde 3-phosphate and acetaldehyde from 2-deoxy-alpha-D-ribose 1-phosphate: step 2/2. Catalyzes a reversible aldol reaction between acetaldehyde and D-glyceraldehyde 3-phosphate to generate 2-deoxy-D-ribose 5-phosphate. This Oceanobacillus iheyensis (strain DSM 14371 / CIP 107618 / JCM 11309 / KCTC 3954 / HTE831) protein is Deoxyribose-phosphate aldolase 1.